The primary structure comprises 245 residues: Oncostatin-M (245 aa).

A signal peptide spans 1-26 (MGAQRMQRTLLSLVLRLLLLCTVATG). Intrachain disulfides connect Cys28/Cys135 and Cys71/Cys177. Asn97 carries an N-linked (GlcNAc...) asparagine glycan. Disordered regions lie at residues 143-171 (SSDP…STFQ) and 197-245 (WGER…APAR). A compositionally biased stretch (pro residues) spans 153–166 (QPGPGPTPLPPTPP). The segment covering 203 to 218 (RSRRHSPCRALKRGAR) has biased composition (basic residues). The propeptide occupies 207-245 (HSPCRALKRGARRTQPFPEIRRLAPRGQPPGSLWGAPAR).

Belongs to the LIF/OSM family. In terms of processing, propeptide processing is not important for receptor binding activity but may be important growth-inhibitory activity.

It is found in the secreted. Its function is as follows. Growth regulator. Inhibits the proliferation of a number of tumor cell lines. It regulates cytokine production, including IL-6, G-CSF and GM-CSF from endothelial cells. Uses both type I OSM receptor (heterodimers composed of LIFR and IL6ST) and type II OSM receptor (heterodimers composed of OSMR and IL6ST). Involved in the maturation of fetal hepatocytes, thereby promoting liver development and regeneration. This Bos taurus (Bovine) protein is Oncostatin-M (OSM).